We begin with the raw amino-acid sequence, 151 residues long: uncharacterized protein (151 aa).

Residues 1–24 (MYYSIIIACLVLLLCLVIYVGHRA) form the signal peptide.

Belongs to the asfivirus EP152R family.

It localises to the virion. This is an uncharacterized protein from Ornithodoros (relapsing fever ticks).